We begin with the raw amino-acid sequence, 220 residues long: uncharacterized protein (220 aa).

The tract at residues 1-50 is disordered; the sequence is MTDDVRDVNTETTDATEVAEIDSAAGEAGDSATEAFDTDSATESTAQKGQ. Residues 39–48 show a composition bias toward polar residues; that stretch reads DSATESTAQK. A helical transmembrane segment spans residues 65-85; the sequence is VPVILILLMLISGGATGWLYL.

To M.tuberculosis Rv1363c.

The protein localises to the membrane. This is an uncharacterized protein from Mycobacterium tuberculosis (strain CDC 1551 / Oshkosh).